The primary structure comprises 343 residues: Serine/threonine-protein kinase SRK2C (343 aa).

Residues Tyr-4–Phe-260 form the Protein kinase domain. ATP contacts are provided by residues Ile-10–Ala-18 and Lys-33. Residue Asp-123 is the Proton acceptor of the active site. Residue Thr-158 is modified to Phosphothreonine.

It belongs to the protein kinase superfamily. Ser/Thr protein kinase family. As to quaternary structure, interacts with I-2 and TOPP1. Expressed in seedlings.

It catalyses the reaction L-seryl-[protein] + ATP = O-phospho-L-seryl-[protein] + ADP + H(+). The enzyme catalyses L-threonyl-[protein] + ATP = O-phospho-L-threonyl-[protein] + ADP + H(+). In terms of biological role, involved in gene regulation and confers tolerance to drought and osmotic stress. This Arabidopsis thaliana (Mouse-ear cress) protein is Serine/threonine-protein kinase SRK2C (SRK2C).